A 2211-amino-acid polypeptide reads, in one-letter code: Nonribosomal peptide synthetase 13 (2211 aa).

Positions 76–475 (TYAELDSLSD…IEHHLQLTLP (400 aa)) are adenylation 1. Residues 594-671 (PPSTPKEATI…EQSKRAGLIQ (78 aa)) enclose the Carrier 1 domain. At serine 631 the chain carries O-(pantetheine 4'-phosphoryl)serine. Residues 710–975 (EDIYPCTALQ…IATVPTRIRV (266 aa)) form a condensation 1 region. The adenylation 2 stretch occupies residues 1169–1563 (TYRELWAHSS…LGAVEASVMR (395 aa)). Residues 1677–1756 (PMSDDNERRL…RSRHLITEQA (80 aa)) enclose the Carrier 2 domain. An O-(pantetheine 4'-phosphoryl)serine modification is found at serine 1714. The tract at residues 1814–2069 (HFQFDLSGAV…CTNYIPYRLS (256 aa)) is condensation 2.

The protein belongs to the NRP synthetase family.

It catalyses the reaction L-proline + L-tryptophan + 2 ATP = brevianamide F + 2 AMP + 2 diphosphate + 2 H(+). The protein operates within mycotoxin biosynthesis. Its function is as follows. Nonribosomal peptide synthetase; part of the gene cluster that mediates the biosynthesis of fumitremorgins, indole alkaloids that carry not only intriguing chemical structures, but also interesting biological and pharmacological activities. The biosynthesis of fumitremorgin-type alkaloids begins by condensation of the two amino acids L-tryptophan and L-proline to brevianamide F, catalyzed by the non-ribosomal peptide synthetase ftmA. Brevianamide F is then prenylated by the prenyltransferase ftmPT1/ftmB in the presence of dimethylallyl diphosphate, resulting in the formation of tryprostatin B. The three cytochrome P450 monooxygenases, ftmP450-1/ftmC, ftmP450-2/ftmE and ftmP450-3/FtmG, are responsible for the conversion of tryprostatin B to 6-hydroxytryprostatin B, tryprostatin A to fumitremorgin C and fumitremorgin C to 12,13-dihydroxyfumitremorgin C, respectively. The putative methyltransferase ftmMT/ftmD is expected for the conversion of 6-hydroxytryprostatin B to tryprostatin A. FtmPT2/FtmH catalyzes the prenylation of 12,13-dihydroxyfumitre-morgin C in the presence of dimethylallyl diphosphate, resulting in the formation of fumitremorgin B. Fumitremorgin B is further converted to verruculogen by ftmOx1/ftmF via the insertion of an endoperoxide bond between the two prenyl moieties. In some fungal species, verruculogen is further converted to fumitremorgin A, but the enzymes involved in this step have not been identified yet. The sequence is that of Nonribosomal peptide synthetase 13 from Aspergillus fumigatus (Neosartorya fumigata).